Here is a 250-residue protein sequence, read N- to C-terminus: Tail assembly protein GT (250 aa).

It belongs to the lambda-like tail assembly protein family. Interacts (via C-terminus) with tail tube protein. Interacts (via N-terminus) with the tail assembly protein G and the tape measure protein.

It is found in the host cytoplasm. In terms of biological role, promotes tail assembly by creating a scaffold for the tail tube proteins. Tail assembly proteins G and GT probably wrap the linear tape measure protein to create a tail assembly scaffold. This allows the polymerization of the tail tube protein, during which G and GT are released, therefore they are absent in the mature virion. The tail assembly protein GT is produced by a rare -1 ribosomal frameshift. The ratio of translated G/GT is about 20, and this ratio is important for proper tail assembly. The protein is Tail assembly protein GT of Escherichia coli (Bacteriophage N15).